A 192-amino-acid polypeptide reads, in one-letter code: UPF0149 protein KPN78578_32810 (192 aa).

Belongs to the UPF0149 family.

The polypeptide is UPF0149 protein KPN78578_32810 (Klebsiella pneumoniae subsp. pneumoniae (strain ATCC 700721 / MGH 78578)).